The chain runs to 286 residues: 4-diphosphocytidyl-2-C-methyl-D-erythritol kinase (286 aa).

Residue Lys11 is part of the active site. 93–103 (PFGAGLGGGSS) serves as a coordination point for ATP. Asp135 is a catalytic residue.

The protein belongs to the GHMP kinase family. IspE subfamily.

The enzyme catalyses 4-CDP-2-C-methyl-D-erythritol + ATP = 4-CDP-2-C-methyl-D-erythritol 2-phosphate + ADP + H(+). It functions in the pathway isoprenoid biosynthesis; isopentenyl diphosphate biosynthesis via DXP pathway; isopentenyl diphosphate from 1-deoxy-D-xylulose 5-phosphate: step 3/6. Its function is as follows. Catalyzes the phosphorylation of the position 2 hydroxy group of 4-diphosphocytidyl-2C-methyl-D-erythritol. The sequence is that of 4-diphosphocytidyl-2-C-methyl-D-erythritol kinase from Chlorobaculum parvum (strain DSM 263 / NCIMB 8327) (Chlorobium vibrioforme subsp. thiosulfatophilum).